Consider the following 883-residue polypeptide: Alanine--tRNA ligase (883 aa).

The Zn(2+) site is built by His-562, His-566, Cys-664, and His-668.

Belongs to the class-II aminoacyl-tRNA synthetase family. Homotetramer. The cofactor is Zn(2+).

The protein localises to the cytoplasm. It catalyses the reaction tRNA(Ala) + L-alanine + ATP = L-alanyl-tRNA(Ala) + AMP + diphosphate. Functionally, catalyzes the attachment of alanine to tRNA(Ala) in a two-step reaction: alanine is first activated by ATP to form Ala-AMP and then transferred to the acceptor end of tRNA(Ala). Also edits incorrectly charged Ser-tRNA(Ala) and Gly-tRNA(Ala) via its editing domain. This is Alanine--tRNA ligase from Buchnera aphidicola subsp. Schizaphis graminum (strain Sg).